We begin with the raw amino-acid sequence, 506 residues long: Cysteine--tRNA ligase (506 aa).

Cysteine 34 contacts Zn(2+). A 'HIGH' region motif is present at residues 36–46 (PTVYDFAHIGN). Positions 230, 269, and 273 each coordinate Zn(2+). Positions 302–306 (KMSKS) match the 'KMSKS' region motif. Lysine 305 is an ATP binding site.

This sequence belongs to the class-I aminoacyl-tRNA synthetase family. As to quaternary structure, monomer. It depends on Zn(2+) as a cofactor.

Its subcellular location is the cytoplasm. The enzyme catalyses tRNA(Cys) + L-cysteine + ATP = L-cysteinyl-tRNA(Cys) + AMP + diphosphate. This is Cysteine--tRNA ligase from Brucella melitensis biotype 2 (strain ATCC 23457).